A 177-amino-acid polypeptide reads, in one-letter code: Adenine phosphoribosyltransferase (177 aa).

The protein belongs to the purine/pyrimidine phosphoribosyltransferase family. In terms of assembly, homodimer.

Its subcellular location is the cytoplasm. It carries out the reaction AMP + diphosphate = 5-phospho-alpha-D-ribose 1-diphosphate + adenine. It functions in the pathway purine metabolism; AMP biosynthesis via salvage pathway; AMP from adenine: step 1/1. Catalyzes a salvage reaction resulting in the formation of AMP, that is energically less costly than de novo synthesis. The chain is Adenine phosphoribosyltransferase from Idiomarina loihiensis (strain ATCC BAA-735 / DSM 15497 / L2-TR).